We begin with the raw amino-acid sequence, 225 residues long: NAD(P)H-quinone oxidoreductase subunit K, chloroplastic (225 aa).

Residues C43, C44, C108, and C139 each contribute to the [4Fe-4S] cluster site.

This sequence belongs to the complex I 20 kDa subunit family. NDH is composed of at least 16 different subunits, 5 of which are encoded in the nucleus. It depends on [4Fe-4S] cluster as a cofactor.

It localises to the plastid. The protein resides in the chloroplast thylakoid membrane. It catalyses the reaction a plastoquinone + NADH + (n+1) H(+)(in) = a plastoquinol + NAD(+) + n H(+)(out). The catalysed reaction is a plastoquinone + NADPH + (n+1) H(+)(in) = a plastoquinol + NADP(+) + n H(+)(out). In terms of biological role, NDH shuttles electrons from NAD(P)H:plastoquinone, via FMN and iron-sulfur (Fe-S) centers, to quinones in the photosynthetic chain and possibly in a chloroplast respiratory chain. The immediate electron acceptor for the enzyme in this species is believed to be plastoquinone. Couples the redox reaction to proton translocation, and thus conserves the redox energy in a proton gradient. In Agrostis stolonifera (Creeping bentgrass), this protein is NAD(P)H-quinone oxidoreductase subunit K, chloroplastic.